Here is a 433-residue protein sequence, read N- to C-terminus: Probable exopolygalacturonase X (433 aa).

The N-terminal stretch at 1–21 is a signal peptide; it reads MKLTQATTLLLSLGLSLPVEG. The disordered stretch occupies residues 30-54; the sequence is VGPKPPFRPLPASTPRNKTCQVQSN. A compositionally biased stretch (polar residues) spans 43–54; sequence TPRNKTCQVQSN. 3 N-linked (GlcNAc...) asparagine glycosylation sites follow: Asn-46, Asn-127, and Asn-197. One copy of the PbH1 1 repeat lies at 229 to 250; the sequence is SSNIVIQNSVINNGDDCVSFKP. Residue Asp-243 is the Proton donor of the active site. Cys-245 and Cys-262 are oxidised to a cystine. N-linked (GlcNAc...) asparagine glycosylation is found at Asn-251 and Asn-263. The stretch at 252-272 is one PbH1 2 repeat; the sequence is STEILVQNLHCNGSHGISVGS. His-266 is an active-site residue. Asn-290, Asn-295, Asn-327, Asn-352, and Asn-362 each carry an N-linked (GlcNAc...) asparagine glycan. One copy of the PbH1 3 repeat lies at 325–346; sequence VQNITYDKMYIENVDWAIEVTQ. The PbH1 4 repeat unit spans residues 360–403; that stretch reads PSNLTISDVYFNDLTGVTSGKNDPNVGTIICSSPDVCSGIHATN. Cys-390 and Cys-396 are disulfide-bonded.

It belongs to the glycosyl hydrolase 28 family.

It localises to the secreted. The enzyme catalyses [(1-&gt;4)-alpha-D-galacturonosyl](n) + H2O = alpha-D-galacturonate + [(1-&gt;4)-alpha-D-galacturonosyl](n-1). Its function is as follows. Specific in hydrolyzing the terminal glycosidic bond of polygalacturonic acid and oligogalacturonates. The chain is Probable exopolygalacturonase X (pgaX) from Aspergillus flavus (strain ATCC 200026 / FGSC A1120 / IAM 13836 / NRRL 3357 / JCM 12722 / SRRC 167).